The primary structure comprises 212 residues: Thymidylate kinase (212 aa).

10-17 (GPEGAGKT) is a binding site for ATP.

It belongs to the thymidylate kinase family.

It catalyses the reaction dTMP + ATP = dTDP + ADP. Its function is as follows. Phosphorylation of dTMP to form dTDP in both de novo and salvage pathways of dTTP synthesis. This Bacillus pumilus (strain SAFR-032) protein is Thymidylate kinase.